Consider the following 168-residue polypeptide: Phosphopantetheine adenylyltransferase (168 aa).

Residue threonine 9 coordinates substrate. Residues 9–10 and histidine 17 each bind ATP; that span reads TF. Substrate-binding residues include lysine 41, leucine 73, and arginine 87. Residues 88–90, glutamate 98, and 123–129 contribute to the ATP site; these read GLR and YQFISGT.

This sequence belongs to the bacterial CoaD family. In terms of assembly, homohexamer. It depends on Mg(2+) as a cofactor.

The protein localises to the cytoplasm. It catalyses the reaction (R)-4'-phosphopantetheine + ATP + H(+) = 3'-dephospho-CoA + diphosphate. It participates in cofactor biosynthesis; coenzyme A biosynthesis; CoA from (R)-pantothenate: step 4/5. Functionally, reversibly transfers an adenylyl group from ATP to 4'-phosphopantetheine, yielding dephospho-CoA (dPCoA) and pyrophosphate. This Ralstonia nicotianae (strain ATCC BAA-1114 / GMI1000) (Ralstonia solanacearum) protein is Phosphopantetheine adenylyltransferase.